The primary structure comprises 1108 residues: Isoleucine--tRNA ligase (1108 aa).

The 'HIGH' region signature appears at 53 to 63 (PFANGLPHYGH). The 'KMSKS' region motif lies at 654–658 (KLSKR). Position 657 (Lys-657) interacts with ATP.

It belongs to the class-I aminoacyl-tRNA synthetase family. IleS type 2 subfamily. In terms of assembly, monomer. Zn(2+) serves as cofactor.

The protein resides in the cytoplasm. The enzyme catalyses tRNA(Ile) + L-isoleucine + ATP = L-isoleucyl-tRNA(Ile) + AMP + diphosphate. Catalyzes the attachment of isoleucine to tRNA(Ile). As IleRS can inadvertently accommodate and process structurally similar amino acids such as valine, to avoid such errors it has two additional distinct tRNA(Ile)-dependent editing activities. One activity is designated as 'pretransfer' editing and involves the hydrolysis of activated Val-AMP. The other activity is designated 'posttransfer' editing and involves deacylation of mischarged Val-tRNA(Ile). The protein is Isoleucine--tRNA ligase of Rickettsia bellii (strain RML369-C).